A 273-amino-acid polypeptide reads, in one-letter code: NAD-dependent protein deacylase (273 aa).

The Deacetylase sirtuin-type domain maps to 20-272 (RERLRQRIFF…PEFVEKLLKG (253 aa)). Position 48 to 67 (48 to 67 (GAGISAESGIRTFRAADGLW)) interacts with NAD(+). Residues Tyr-92 and Arg-95 each coordinate substrate. NAD(+) is bound at residue 129–132 (QNID). His-147 acts as the Proton acceptor in catalysis. Residues Cys-155 and Cys-174 each coordinate Zn(2+). NAD(+) is bound by residues 214 to 216 (GTS), 240 to 242 (NLE), and Ala-258.

Belongs to the sirtuin family. Class III subfamily. The cofactor is Zn(2+).

It localises to the cytoplasm. The enzyme catalyses N(6)-acetyl-L-lysyl-[protein] + NAD(+) + H2O = 2''-O-acetyl-ADP-D-ribose + nicotinamide + L-lysyl-[protein]. The catalysed reaction is N(6)-succinyl-L-lysyl-[protein] + NAD(+) + H2O = 2''-O-succinyl-ADP-D-ribose + nicotinamide + L-lysyl-[protein]. It catalyses the reaction N(6)-(2-hydroxyisobutanoyl)-L-lysyl-[protein] + NAD(+) + H2O = 2''-O-(2-hydroxyisobutanoyl)-ADP-D-ribose + nicotinamide + L-lysyl-[protein]. NAD-dependent lysine deacetylase that specifically removes acetyl groups on target proteins. Also acts as a protein-lysine deacylase by mediating protein desuccinylation and de-2-hydroxyisobutyrylation. Modulates the activities of several proteins which are inactive in their acylated form. This Escherichia coli O6:H1 (strain CFT073 / ATCC 700928 / UPEC) protein is NAD-dependent protein deacylase.